The primary structure comprises 129 residues: Large ribosomal subunit protein bL19 (129 aa).

The protein belongs to the bacterial ribosomal protein bL19 family.

Functionally, this protein is located at the 30S-50S ribosomal subunit interface and may play a role in the structure and function of the aminoacyl-tRNA binding site. The chain is Large ribosomal subunit protein bL19 from Rhizorhabdus wittichii (strain DSM 6014 / CCUG 31198 / JCM 15750 / NBRC 105917 / EY 4224 / RW1) (Sphingomonas wittichii).